A 1137-amino-acid chain; its full sequence is Morphogenesis-related protein MSB1 (1137 aa).

Disordered regions lie at residues 1–59 (MNDM…NSMD) and 483–520 (QLKK…LSQT). Polar residues predominate over residues 21–50 (SNSPKKAQKTNLSPNKNQNNEKNVPRSNGR). At S538 the chain carries Phosphoserine. 3 disordered regions span residues 577–620 (LNNL…EERV), 736–799 (STNT…SDSK), and 814–871 (AVSP…PQFS). Residues 593-608 (FEEKSKDAPIREEYHT) show a composition bias toward basic and acidic residues. Positions 736–749 (STNTNDSCADSSKY) are enriched in polar residues. Residues 750 to 769 (TADRKLAEPRKISEESKVND) show a composition bias toward basic and acidic residues. Residues 770–796 (DSSSYYSPNINNLPASRMPSQPTYSNS) are compositionally biased toward polar residues. Phosphoserine is present on residues S776 and S816.

Functionally, may play a role in polarity establishment and bud formation. The MSB1 gene may be functionally redundant. The chain is Morphogenesis-related protein MSB1 (MSB1) from Saccharomyces cerevisiae (strain ATCC 204508 / S288c) (Baker's yeast).